Here is a 2521-residue protein sequence, read N- to C-terminus: Piezo-type mechanosensitive ion channel component 1 (2521 aa).

At 1 to 12 the chain is on the cytoplasmic side; sequence MEPHVLGAVLYW. Residues 13 to 25 traverse the membrane as a helical segment; sequence LLLPCALLAACLL. The Extracellular segment spans residues 26-28; sequence RFS. A helical transmembrane segment spans residues 29–44; sequence GLSLVYLLFLLLLPWF. The Cytoplasmic portion of the chain corresponds to 45–58; it reads PGPTRCGLQGHTGR. The chain crosses the membrane as a helical span at residues 59–81; sequence LLRALLGLSLLFLVAHLALQICL. Residues 82–121 are Extracellular-facing; the sequence is HIVPRLDQLLGPSCSRWETLSRHIGVTRLDLKDIPNAIRL. The helical transmembrane segment at 122 to 138 threads the bilayer; that stretch reads VAPDLGILVVSSVCLGI. Residues 139–194 lie on the Cytoplasmic side of the membrane; the sequence is CGRLARNTRQSPHPRELDDDERDVDASPTAGLQEAATLAPTRRSRLAARFRVTAHW. Residues 195-214 form a helical membrane-spanning segment; sequence LLVAAGRVLAVTLLALAGIA. At 215–216 the chain is on the extracellular side; it reads HP. Residues 217–236 traverse the membrane as a helical segment; the sequence is SALSSVYLLLFLALCTWWAC. Residues 237–247 are Cytoplasmic-facing; that stretch reads HFPISTRGFSR. A helical transmembrane segment spans residues 248-268; the sequence is LCVAVGCFGAGHLICLYCYQM. The Extracellular segment spans residues 269-309; sequence PLAQALLPPAGIWARVLGLKDFVGPTNCSSPHALVLNTGLD. Residue Asn-295 is glycosylated (N-linked (GlcNAc...) asparagine). The helical transmembrane segment at 310 to 330 threads the bilayer; sequence WPVYASPGVLLLLCYATASLR. The Cytoplasmic portion of the chain corresponds to 331–417; it reads KLRAYRPSGQ…EASPLHSLGH (87 aa). A helical membrane pass occupies residues 418–438; the sequence is LIMDQSYVCALIAMMVWSITY. Residues 439 to 440 lie on the Extracellular side of the membrane; it reads HS. The helical transmembrane segment at 441-456 threads the bilayer; that stretch reads WLTFVLLLWACLIWTV. Over 457–461 the chain is Cytoplasmic; sequence RSRHQ. Residues 462-484 traverse the membrane as a helical segment; sequence LAMLCSPCILLYGMTLCCLRYVW. Residues 485-512 are Extracellular-facing; the sequence is AMDLRPELPTTLGPVSLRQLGLEHTRYP. The chain crosses the membrane as a helical span at residues 513–530; sequence CLDLGAMLLYTLTFWLLL. Topologically, residues 531–574 are cytoplasmic; the sequence is RQFVKEKLLKWAESPAALTEVTVADTEPTRTQTLLQSLGELVKG. The helical transmembrane segment at 575 to 595 threads the bilayer; sequence VYAKYWIYVCAGMFIVVSFAG. A topological domain (extracellular) is located at residue Arg-596. A helical membrane pass occupies residues 597–617; the sequence is LVVYKIVYMFLFLLCLTLFQV. The Cytoplasmic portion of the chain corresponds to 618–627; sequence YYSLWRKLLK. A helical membrane pass occupies residues 628–649; that stretch reads AFWWLVVAYTMLVLIAVYTFQF. The Extracellular segment spans residues 650-679; that stretch reads QDFPAYWRNLTGFTDEQLGDLGLEQFSVSE. Residues 680 to 696 traverse the membrane as a helical segment; sequence LFSSILVPGFFLLACIL. At 697 to 816 the chain is on the cytoplasmic side; sequence QLHYFHRPFM…RRLLELHVFK (120 aa). Residue Thr-734 is modified to Phosphothreonine. The interval 738-769 is disordered; it reads REEQQEHQQQQQEEEEEEEDSRDEGLGVATPH. Acidic residues predominate over residues 749–759; the sequence is QEEEEEEEDSR. At Ser-758 the chain carries Phosphoserine. A helical transmembrane segment spans residues 817 to 828; the sequence is LVALYTVWVALK. The Extracellular segment spans residues 829 to 831; that stretch reads EVS. A helical transmembrane segment spans residues 832 to 845; sequence VMNLLLVVLWAFAL. Topologically, residues 846–859 are cytoplasmic; sequence PYPRFRPMASCLST. The helical transmembrane segment at 860 to 874 threads the bilayer; it reads VWTCVIIVCKMLYQL. Topologically, residues 875 to 926 are extracellular; it reads KVVNPQEYSSNCTEPFPNSTNLLPTEISQSLLYRGPVDPANWFGVRKGFPNL. Residues 927 to 954 form a helical membrane-spanning segment; sequence GYIQNHLQVLLLLVFEAIVYRRQEHYRR. The Cytoplasmic segment spans residues 955-994; it reads QHQLAPLPAQAVFASGTRQQLDQDLLGCLKYFINFFFYKF. Residues 995–1010 traverse the membrane as a helical segment; that stretch reads GLEICFLMAVNVIGQR. The Extracellular portion of the chain corresponds to 1011-1012; that stretch reads MN. A helical membrane pass occupies residues 1013–1028; that stretch reads FLVTLHGCWLVAILTR. The Cytoplasmic segment spans residues 1029–1041; that stretch reads RHRQAIARLWPNY. A helical membrane pass occupies residues 1042-1057; sequence CLFLALFLLYQYLLCL. The Extracellular portion of the chain corresponds to 1058 to 1096; that stretch reads GMPPALCIDYPWRWSRAVPMNSALIKWLYLPDFFRAPNS. A helical transmembrane segment spans residues 1097-1118; sequence TNLISDFLLLLCASQQWQVFSA. Topologically, residues 1119-1153 are cytoplasmic; sequence ERTEEWQRMAGVNTDRLEPLRGEPNPVPNFIHCRS. A helical membrane pass occupies residues 1154 to 1180; that stretch reads YLDMLKVAVFRYLFWLVLVVVFVTGAT. Topologically, residues 1181 to 1185 are extracellular; the sequence is RISIF. The chain crosses the membrane as a helical span at residues 1186-1204; that stretch reads GLGYLLACFYLLLFGTALL. Topologically, residues 1205 to 1217 are cytoplasmic; the sequence is QRDTRARLVLWDC. Residues 1218–1236 form a helical membrane-spanning segment; the sequence is LILYNVTVIISKNMLSLLA. The Extracellular segment spans residues 1237–1285; sequence CVFVEQMQTGFCWVIQLFSLVCTVKGYYDPKEMMDRDQDCLLPVEEAGI. Residues 1286 to 1302 traverse the membrane as a helical segment; sequence IWDSVCFFFLLLQRRVF. The Cytoplasmic portion of the chain corresponds to 1303 to 1656; sequence LSHYYLHVRA…ELLLDRRLRI (354 aa). A coiled-coil region spans residues 1339-1368; sequence HRRIEEKSLAQLKRQMERIRAKQEKHRQGR. Disordered stretches follow at residues 1356–1402, 1462–1498, and 1576–1630; these read RIRA…RRQW, RQQEQEQARQEQAGQLPTGGGPSQEVEPAEGPEEAAA, and TLPG…DPGE. A compositionally biased stretch (low complexity) spans 1385–1398; sequence LEPGPDSPGGSSPP. A phosphoserine mark is found at Ser-1391 and Ser-1396. Residues Ser-1636 and Ser-1646 each carry the phosphoserine modification. The helical transmembrane segment at 1657–1700 threads the bilayer; the sequence is PELEEAELFAEGQGRALRLLRAVYQCVAAHSELLCYFIIILNHM. Residues 1701 to 1704 lie on the Extracellular side of the membrane; sequence VTAS. The chain crosses the membrane as a helical span at residues 1705–1720; that stretch reads AGSLVLPVLVFLWAML. The Cytoplasmic segment spans residues 1721 to 1728; it reads SIPRPSKR. A helical membrane pass occupies residues 1729–1747; sequence FWMTAIVFTEIAVVVKYLF. The Extracellular segment spans residues 1748–1779; it reads QFGFFPWNSHVVLRRYENKPYFPPRILGLEKT. The chain crosses the membrane as a helical span at residues 1780–1801; that stretch reads DGYIKYDLVQLMALFFHRSQLL. Topologically, residues 1802 to 1960 are cytoplasmic; the sequence is CYGLWDHEED…HTKYRAATDV (159 aa). Basic and acidic residues predominate over residues 1811 to 1822; the sequence is DSPSKEHDKSGE. The segment at 1811–1921 is disordered; it reads DSPSKEHDKS…RPSRSGGRVR (111 aa). Thr-1854 carries the phosphothreonine modification. The segment covering 1859–1868 has biased composition (basic and acidic residues); the sequence is VELRPRDTRR. Positions 1869–1878 are enriched in basic residues; that stretch reads ISLRFRRRKK. Acidic residues predominate over residues 1890 to 1903; the sequence is EAEDREEEEGEEEK. Positions 1904 to 1913 are enriched in basic and acidic residues; it reads EAPTGREKRP. The chain crosses the membrane as a helical span at residues 1961–1980; it reads YALMFLADVVDFIIIIFGFW. Over 1981–2000 the chain is Extracellular; the sequence is AFGKHSAATDITSSLSDDQV. A helical membrane pass occupies residues 2001–2017; it reads PEAFLVMLLIQFSTMVV. Topologically, residues 2018 to 2031 are cytoplasmic; the sequence is DRALYLRKTVLGKL. A helical transmembrane segment spans residues 2032 to 2052; the sequence is AFQVALVLAIHLWMFFILPAV. Residues 2053–2060 are Extracellular-facing; sequence TERMFNQN. A helical membrane pass occupies residues 2061–2076; it reads VVAQLWYFVKCIYFAL. The Cytoplasmic segment spans residues 2077–2176; sequence SAYQIRCGYP…KKKIVKYGMG (100 aa). The helical transmembrane segment at 2177 to 2197 threads the bilayer; sequence GLIILFLIAIIWFPLLFMSLV. The Extracellular segment spans residues 2198–2431; that stretch reads RSVVGVVNQP…IFSDKVSPPS (234 aa). Asn-2294 carries N-linked (GlcNAc...) asparagine glycosylation. Cysteines 2411 and 2415 form a disulfide. A helical membrane pass occupies residues 2432-2452; sequence LGFLAGYGIMGLYVSIVLVIG. Topologically, residues 2453-2521 are cytoplasmic; that stretch reads KFVRGFFSEI…TMIKWTREKE (69 aa).

It belongs to the PIEZO (TC 1.A.75) family. In terms of assembly, homotrimer; the homotrimer forms a propeller-shaped Piezo channel with a cation-ion conducting pore. Heterotrimeric interaction may occur between PIEZO1 and PIEZO2. Interacts with PKD2. Interacts with STOML3. Interacts with TMC1, TMC2, PCDH15 and CIB2; the interaction may be part of the MET complex. Interacts with MDFIC (via C-terminus); the interaction prolongs Piezo channel inactivation. Interacts with MDFI (via C-terminus); the interaction prolongs Piezo channel inactivation. In terms of tissue distribution, expressed in numerous tissues. In normal brain, expressed exclusively in neurons, not in astrocytes. In Alzheimer disease brains, expressed in about half of the activated astrocytes located around classical senile plaques. In Parkinson disease substantia nigra, not detected in melanin-containing neurons nor in activated astrocytes. Expressed in erythrocytes (at protein level). Expressed in myoblasts (at protein level).

The protein resides in the endoplasmic reticulum membrane. Its subcellular location is the endoplasmic reticulum-Golgi intermediate compartment membrane. It is found in the cell membrane. It localises to the cell projection. The protein localises to the lamellipodium membrane. The catalysed reaction is K(+)(in) = K(+)(out). It carries out the reaction Na(+)(in) = Na(+)(out). The enzyme catalyses Ca(2+)(in) = Ca(2+)(out). It catalyses the reaction Mg(2+)(in) = Mg(2+)(out). With respect to regulation, regulated by auxillary subunits MDFIC and MDFI. Down-regulated by phosphatidylserines exposed on the cell surface. Divalent ions decrease the single-channel permeability of K(+). Pore-forming subunit of the mechanosensitive non-specific cation Piezo channel required for rapidly adapting mechanically activated (MA) currents and has a key role in sensing touch and tactile pain. Piezo channels are homotrimeric three-blade propeller-shaped structures that utilize a cap-motion and plug-and-latch mechanism to gate their ion-conducting pathways. Generates currents characterized by a linear current-voltage relationship that are sensitive to ruthenium red and gadolinium. Conductance to monovalent alkali ions is highest for K(+), intermediate for Na(+) and lowest for Li(+). Divalent ions except for Mn(2+) permeate the channel but more slowly than the monovalent ions and they also reduce K(+) currents. Plays a key role in epithelial cell adhesion by maintaining integrin activation through R-Ras recruitment to the ER, most probably in its activated state, and subsequent stimulation of calpain signaling. In inner ear hair cells, PIEZO1/2 subunits may constitute part of the mechanotransducer (MET) non-selective cation channel complex where they may act as pore-forming ion-conducting component in the complex. In the kidney, may contribute to the detection of intraluminal pressure changes and to urine flow sensing. Acts as a shear-stress sensor that promotes endothelial cell organization and alignment in the direction of blood flow through calpain activation. Plays a key role in blood vessel formation and vascular structure in both development and adult physiology. Acts as a sensor of phosphatidylserine (PS) flipping at the plasma membrane and governs morphogenesis of muscle cells. In myoblasts, flippase-mediated PS enrichment at the inner leaflet of plasma membrane triggers channel activation and Ca2+ influx followed by Rho GTPases signal transduction, leading to assembly of cortical actomyosin fibers and myotube formation. In Homo sapiens (Human), this protein is Piezo-type mechanosensitive ion channel component 1.